Here is an 879-residue protein sequence, read N- to C-terminus: Metabotropic glutamate receptor 3 (879 aa).

Positions 1–22 are cleaved as a signal peptide; that stretch reads MKMLTRLQVLTLALFSKGFLLS. The Extracellular portion of the chain corresponds to 23–576; that stretch reads LGDHNFLRRE…EDYIRWEDAW (554 aa). A disulfide bridge connects residues C57 and C99. L-glutamate is bound by residues S151 and 172 to 174; that span reads AST. N-linked (GlcNAc...) asparagine glycosylation occurs at N209. Y222 lines the L-glutamate pocket. 7 disulfide bridges follow: C240-C527, C361-C373, C412-C419, C509-C528, C513-C531, C534-C546, and C549-C562. Residue N292 is glycosylated (N-linked (GlcNAc...) asparagine). Residue D301 coordinates L-glutamate. K389 is a binding site for L-glutamate. Residues N414 and N439 are each glycosylated (N-linked (GlcNAc...) asparagine). The helical transmembrane segment at 577–599 threads the bilayer; sequence VIGPVTIACLGFMCTCMVVTVFI. The Cytoplasmic segment spans residues 600–613; sequence KHNNTPLVKASGRE. Residues 614 to 634 form a helical membrane-spanning segment; that stretch reads LCYILLFGVGLSYCMTFFFIA. Residues 635–645 are Extracellular-facing; that stretch reads KPSPVICALRR. The helical transmembrane segment at 646 to 664 threads the bilayer; that stretch reads LGLGSSFAICYSALLTKTN. At 665-688 the chain is on the cytoplasmic side; sequence CIARIFDGVKNGAQRPKFISPSSQ. Residues 689–709 form a helical membrane-spanning segment; that stretch reads VFICLGLILVQIVMVSVWLIL. At 710 to 734 the chain is on the extracellular side; that stretch reads EAPGTRRYTLAEKRETVILKCNVKD. A helical membrane pass occupies residues 735 to 756; the sequence is SSMLISLTYDVILVILCTVYAF. Topologically, residues 757 to 769 are cytoplasmic; that stretch reads KTRKCPENFNEAK. A helical transmembrane segment spans residues 770 to 792; sequence FIGFTMYTTCIIWLAFLPIFYVT. Residues 793 to 802 are Extracellular-facing; sequence SSDYRVQTTT. A helical membrane pass occupies residues 803–828; sequence MCISVSLSGFVVLGCLFAPKVHIILF. Over 829-879 the chain is Cytoplasmic; the sequence is QPQKNVVTHRLHLNRFSVSGTGTTYSQSSASTYVPTVCNGREVLDSTTSSL.

This sequence belongs to the G-protein coupled receptor 3 family. Interacts with TAMALIN.

The protein resides in the cell membrane. In terms of biological role, G-protein coupled receptor for glutamate. Ligand binding causes a conformation change that triggers signaling via guanine nucleotide-binding proteins (G proteins) and modulates the activity of down-stream effectors. Signaling inhibits adenylate cyclase activity. The chain is Metabotropic glutamate receptor 3 (GRM3) from Pongo abelii (Sumatran orangutan).